The following is a 466-amino-acid chain: Soluble pyridine nucleotide transhydrogenase (466 aa).

36–45 contacts FAD; the sequence is ERYHNVGGGC.

This sequence belongs to the class-I pyridine nucleotide-disulfide oxidoreductase family. FAD serves as cofactor.

It localises to the cytoplasm. It carries out the reaction NAD(+) + NADPH = NADH + NADP(+). In terms of biological role, conversion of NADPH, generated by peripheral catabolic pathways, to NADH, which can enter the respiratory chain for energy generation. The polypeptide is Soluble pyridine nucleotide transhydrogenase (Salmonella paratyphi C (strain RKS4594)).